The primary structure comprises 318 residues: Beta-sarcoglycan (318 aa).

The interval 1–32 is disordered; it reads MAAAAAAAAEQQSSNGPVKKSMREKAVERRSV. Topologically, residues 1–65 are cytoplasmic; that stretch reads MAAAAAAAAE…GLRGRKGNLA (65 aa). Positions 21 to 32 are enriched in basic and acidic residues; that stretch reads SMREKAVERRSV. A helical; Signal-anchor for type II membrane protein transmembrane segment spans residues 66 to 86; that stretch reads ICVIILLFILAVINLIITLVI. Residues 87-318 are Extracellular-facing; that stretch reads WAVIRIGPNG…ISDNPCGNTH (232 aa). N-linked (GlcNAc...) asparagine glycosylation is found at Asn158, Asn211, and Asn258. Disulfide bonds link Cys288–Cys314 and Cys290–Cys307.

It belongs to the sarcoglycan beta/delta/gamma/zeta family. Cross-link to form 2 major subcomplexes: one consisting of SGCB, SGCD and SGCG and the other consisting of SGCB and SGCD. The association between SGCB and SGCG is particularly strong while SGCA is loosely associated with the other sarcoglycans. Disulfide bonds are present. As to expression, highest expression in heart and skeletal muscle. Low expression in brain, kidney, placenta, pancreas and lung. High expression in fetal brain. Also found in fetal lung, kidney and liver.

Its subcellular location is the cell membrane. It is found in the sarcolemma. It localises to the cytoplasm. The protein localises to the cytoskeleton. In terms of biological role, component of the sarcoglycan complex, a subcomplex of the dystrophin-glycoprotein complex which forms a link between the F-actin cytoskeleton and the extracellular matrix. This Homo sapiens (Human) protein is Beta-sarcoglycan (SGCB).